The primary structure comprises 320 residues: Alpha/beta hydrolase domain-containing protein 17C (320 aa).

Positions 50 to 75 (RAPAPAATPAPAPAAQPAPAEEGAGP) are disordered. Pro residues predominate over residues 55 to 65 (AATPAPAPAAQ). Residues Ser202, Asp267, and His296 each act as charge relay system in the active site.

This sequence belongs to the AB hydrolase superfamily. ABHD17 family. In terms of processing, palmitoylated on cysteine residues located in a cysteine cluster at the N-terminus which promotes membrane localization. Palmitoylation is required for post-synaptic localization and for depalmitoylating activity towards DLG4/PSD95.

Its subcellular location is the recycling endosome membrane. The protein resides in the cell projection. It localises to the dendritic spine. It is found in the postsynaptic density membrane. It carries out the reaction S-hexadecanoyl-L-cysteinyl-[protein] + H2O = L-cysteinyl-[protein] + hexadecanoate + H(+). Hydrolyzes fatty acids from S-acylated cysteine residues in proteins. Has depalmitoylating activity towards DLG4/PSD95. The protein is Alpha/beta hydrolase domain-containing protein 17C of Mus musculus (Mouse).